The chain runs to 88 residues: DNA-directed RNA polymerase subunit omega (88 aa).

This sequence belongs to the RNA polymerase subunit omega family. The RNAP catalytic core consists of 2 alpha, 1 beta, 1 beta' and 1 omega subunit. When a sigma factor is associated with the core the holoenzyme is formed, which can initiate transcription.

It carries out the reaction RNA(n) + a ribonucleoside 5'-triphosphate = RNA(n+1) + diphosphate. Functionally, promotes RNA polymerase assembly. Latches the N- and C-terminal regions of the beta' subunit thereby facilitating its interaction with the beta and alpha subunits. The protein is DNA-directed RNA polymerase subunit omega of Salinispora tropica (strain ATCC BAA-916 / DSM 44818 / JCM 13857 / NBRC 105044 / CNB-440).